The sequence spans 2194 residues: Nucleosome-remodeling factor subunit NURF301-like (2194 aa).

Over residues 1 to 12 the composition is skewed to basic residues; sequence MAPPRGRSKRKH. Residues 1 to 137 are disordered; the sequence is MAPPRGRSKR…EEEESSDDEF (137 aa). A compositionally biased stretch (basic and acidic residues) spans 60-79; it reads AQRETPSDAEEVEVKIEEIS. A compositionally biased stretch (polar residues) spans 80–93; sequence VRSTPASTPAPKST. Over residues 94 to 112 the composition is skewed to basic residues; that stretch reads SKARGRPKKNPTPPRRKSL. The segment covering 118–137 has biased composition (acidic residues); sequence DIIYMDEDSEEEEESSDDEF. DDT domains lie at 196-256 and 341-396; these read TASI…SDDE and VGKF…SAVR. A PHD-type 1 zinc finger spans residues 347–392; sequence DENCRVCGKSSGRVVGCTQCEAAFHVECSHLKPFPEVLVCNICKKN. Disordered stretches follow at residues 1091-1122, 1158-1255, 1413-1433, 1657-1701, and 1834-1888; these read ESWL…SLDN, AKRK…PQPN, TSNF…PVYS, MRQE…SNDS, and ESIA…HTPG. Residues 1151 to 1187 adopt a coiled-coil conformation; sequence RAEAEKTAKRKLEATRKAQKAKEDEERRRIQQQQQRS. Basic and acidic residues predominate over residues 1158–1179; the sequence is AKRKLEATRKAQKAKEDEERRR. Positions 1665 to 1684 are enriched in polar residues; sequence TSGYDSSGNPIRSITSSGDT. A compositionally biased stretch (basic and acidic residues) spans 1852 to 1861; it reads KSEDDRDKPE. DDT domains follow at residues 1883 to 1953 and 1948 to 2014; these read AFHT…EQER and IEEQ…AEGY. 2 consecutive PHD-type zinc fingers follow at residues 1899–1950 and 1959–2010; these read IEHC…CIEE and ALYC…CTRE. A Bromo domain is found at 2030–2134; sequence QLTRADYTHV…EVFDKKLIDV (105 aa).

It belongs to the BPTF family. As to quaternary structure, part of a nucleosome remodeling factor-like (NURF-like) complex containing nurf-1 and isw-1.

It is found in the nucleus. Its function is as follows. Histone-binding component of a NURF-like (nucleosome remodeling factor-like) complex, which would catalyze ATP-dependent nucleosome sliding and facilitate transcription of chromatin. Involved in vulval cell fates. The polypeptide is Nucleosome-remodeling factor subunit NURF301-like (nurf-1) (Caenorhabditis elegans).